We begin with the raw amino-acid sequence, 368 residues long: Galactoside 2-alpha-L-fucosyltransferase Sec1 (368 aa).

Topologically, residues methionine 1 to cysteine 20 are cytoplasmic. Residues proline 21–cysteine 41 traverse the membrane as a helical; Signal-anchor for type II membrane protein segment. Over histidine 42–leucine 368 the chain is Lumenal. Residues asparagine 195, asparagine 289, and asparagine 315 are each glycosylated (N-linked (GlcNAc...) asparagine).

It belongs to the glycosyltransferase 11 family.

It is found in the golgi apparatus. The protein localises to the golgi stack membrane. The catalysed reaction is a ganglioside GM1 + GDP-beta-L-fucose = a ganglioside Fuc-GM1 + GDP + H(+). Its pathway is protein modification; protein glycosylation. Its function is as follows. Catalyzes the transfer of alpha 1,2-linked fucose to ganglioside GM1 and galacto-N-biose. This Mus musculus (Mouse) protein is Galactoside 2-alpha-L-fucosyltransferase Sec1.